The chain runs to 620 residues: 1-deoxy-D-xylulose-5-phosphate synthase (620 aa).

Thiamine diphosphate is bound by residues histidine 80 and glycine 121–serine 123. Aspartate 152 is a binding site for Mg(2+). Thiamine diphosphate contacts are provided by residues glycine 153 to alanine 154, asparagine 181, tyrosine 288, and glutamate 370. Asparagine 181 lines the Mg(2+) pocket.

It belongs to the transketolase family. DXPS subfamily. Homodimer. Mg(2+) serves as cofactor. Thiamine diphosphate is required as a cofactor.

The enzyme catalyses D-glyceraldehyde 3-phosphate + pyruvate + H(+) = 1-deoxy-D-xylulose 5-phosphate + CO2. It participates in metabolic intermediate biosynthesis; 1-deoxy-D-xylulose 5-phosphate biosynthesis; 1-deoxy-D-xylulose 5-phosphate from D-glyceraldehyde 3-phosphate and pyruvate: step 1/1. Its function is as follows. Catalyzes the acyloin condensation reaction between C atoms 2 and 3 of pyruvate and glyceraldehyde 3-phosphate to yield 1-deoxy-D-xylulose-5-phosphate (DXP). In Salmonella typhi, this protein is 1-deoxy-D-xylulose-5-phosphate synthase.